The primary structure comprises 530 residues: CTP synthase (530 aa).

The segment at Met1–Leu264 is amidoligase domain. Residue Ser13 participates in CTP binding. Position 13 (Ser13) interacts with UTP. An ATP-binding site is contributed by Gly14–Val19. Tyr54 lines the L-glutamine pocket. Asp71 contacts ATP. Mg(2+) is bound by residues Asp71 and Glu139. CTP is bound by residues Asp146–Glu148, Lys185–Gln190, and Lys221. Residues Lys185 to Gln190 and Lys221 each bind UTP. The region spanning Ser289–Arg530 is the Glutamine amidotransferase type-1 domain. Gly351 provides a ligand contact to L-glutamine. Cys378 functions as the Nucleophile; for glutamine hydrolysis in the catalytic mechanism. L-glutamine is bound by residues Phe379 to Gln382, Glu402, and Arg459. Catalysis depends on residues His504 and Glu506.

The protein belongs to the CTP synthase family. As to quaternary structure, homotetramer.

The enzyme catalyses UTP + L-glutamine + ATP + H2O = CTP + L-glutamate + ADP + phosphate + 2 H(+). It carries out the reaction L-glutamine + H2O = L-glutamate + NH4(+). The catalysed reaction is UTP + NH4(+) + ATP = CTP + ADP + phosphate + 2 H(+). It participates in pyrimidine metabolism; CTP biosynthesis via de novo pathway; CTP from UDP: step 2/2. Allosterically activated by GTP, when glutamine is the substrate; GTP has no effect on the reaction when ammonia is the substrate. The allosteric effector GTP functions by stabilizing the protein conformation that binds the tetrahedral intermediate(s) formed during glutamine hydrolysis. Inhibited by the product CTP, via allosteric rather than competitive inhibition. Catalyzes the ATP-dependent amination of UTP to CTP with either L-glutamine or ammonia as the source of nitrogen. Regulates intracellular CTP levels through interactions with the four ribonucleotide triphosphates. This is CTP synthase from Pyrobaculum aerophilum (strain ATCC 51768 / DSM 7523 / JCM 9630 / CIP 104966 / NBRC 100827 / IM2).